A 579-amino-acid chain; its full sequence is Alpha-glucosidase (579 aa).

Aspartate 212 functions as the Nucleophile in the catalytic mechanism. Residue glutamate 269 is the Proton donor of the active site.

Belongs to the glycosyl hydrolase 13 family.

It catalyses the reaction Hydrolysis of terminal, non-reducing (1-&gt;4)-linked alpha-D-glucose residues with release of alpha-D-glucose.. The chain is Alpha-glucosidase (mal1) from Schizosaccharomyces pombe (strain 972 / ATCC 24843) (Fission yeast).